Consider the following 231-residue polypeptide: MSDKILIVDDEHEIADLVELYLKNENYTVFKYYTAKEALECIDKSEIDLAILDIMLPGTSGLTICQKIRDKHTYPIIMLTGKDTEVDKITGLTIGADDYITKPFRPLELIARVKAQLRRYKKFSGVKEQNENVIVHSGLVINVNTHECYLNEKQLSLTPTEFSILRILCENKGNVVSSELLFHEIWGDEYFSKSNNTITVHIRHLREKMNDTIDNPKYIKTVWGVGYKIEK.

The region spanning 4–117 (KILIVDDEHE…ELIARVKAQL (114 aa)) is the Response regulatory domain. 4-aspartylphosphate is present on Asp-53. The segment at residues 131–231 (ENVIVHSGLV…VWGVGYKIEK (101 aa)) is a DNA-binding region (ompR/PhoB-type).

In terms of assembly, monomer. Post-translationally, phosphorylated by VanS. Dephosphorylated by VanS. Can be phosphorylated nonenzymatically by acetyl-phosphate.

The protein resides in the cytoplasm. Its function is as follows. Member of the two-component regulatory system VanS/VanR. Binds to the promoter regions of target genes, including vanH and vanR; phosphorylation of VanR increases binding affinity to the vanH and vanR promoters significantly. DNA binding may be inhibited by the cognate sensor protein, VanS. Activates the transcription of vanH, vanA and vanX in response to vancomycin which results in vancomycin resistance. Involved in conferring vancomycin resistance. This chain is Regulatory protein VanR (vanR), found in Enterococcus faecium (Streptococcus faecium).